Here is a 209-residue protein sequence, read N- to C-terminus: Urease accessory protein UreE (209 aa).

A compositionally biased stretch (basic and acidic residues) spans 170–196 (EHHGHSHSHSHDHDHDHDHDHDHDHQH). The segment at 170–209 (EHHGHSHSHSHDHDHDHDHDHDHDHQHGPSCSHGHHHGHR) is disordered.

This sequence belongs to the UreE family.

The protein localises to the cytoplasm. In terms of biological role, involved in urease metallocenter assembly. Binds nickel. Probably functions as a nickel donor during metallocenter assembly. The sequence is that of Urease accessory protein UreE from Burkholderia mallei (strain NCTC 10247).